A 132-amino-acid chain; its full sequence is Translation initiation factor 5A (132 aa).

K36 is subject to Hypusine.

It belongs to the eIF-5A family.

The protein localises to the cytoplasm. Functionally, functions by promoting the formation of the first peptide bond. The protein is Translation initiation factor 5A (eIF5A) of Pyrobaculum arsenaticum (strain DSM 13514 / JCM 11321 / PZ6).